We begin with the raw amino-acid sequence, 565 residues long: Putative ribonucleoside-diphosphate reductase large subunit (565 aa).

Substrate contacts are provided by residues Ser-60, 74-75 (SC), Gly-103, 256-260 (NLCNE), and 400-404 (PNANS). Cys-75 and Cys-273 are disulfide-bonded. Catalysis depends on Asn-256, which acts as the Proton acceptor. The Cysteine radical intermediate role is filled by Cys-258. Glu-260 acts as the Proton acceptor in catalysis.

The protein belongs to the ribonucleoside diphosphate reductase large chain family. In terms of assembly, heterotetramer composed of a homodimer of the large subunit (R1) and a homodimer of the small subunit (R2). Larger multisubunit protein complex are also active, composed of (R1)n(R2)n.

The enzyme catalyses a 2'-deoxyribonucleoside 5'-diphosphate + [thioredoxin]-disulfide + H2O = a ribonucleoside 5'-diphosphate + [thioredoxin]-dithiol. Under complex allosteric control mediated by deoxynucleoside triphosphates and ATP binding. The type of nucleotide bound at the specificity site determines substrate preference. It seems probable that ATP makes the enzyme reduce CDP and UDP, dGTP favors ADP reduction and dTTP favors GDP reduction. Its function is as follows. Ribonucleoside-diphosphate reductase holoenzyme provides the precursors necessary for viral DNA synthesis. Allows virus growth in non-dividing cells. Catalyzes the biosynthesis of deoxyribonucleotides from the corresponding ribonucleotides. The sequence is that of Putative ribonucleoside-diphosphate reductase large subunit from Frog virus 3 (isolate Goorha) (FV-3).